Here is a 93-residue protein sequence, read N- to C-terminus: uncharacterized protein (93 aa).

The protein localises to the plastid. It localises to the chloroplast. This is an uncharacterized protein from Diacronema lutheri (Unicellular marine alga).